A 103-amino-acid polypeptide reads, in one-letter code: uncharacterized protein (103 aa).

The region spanning 10–63 is the CHCH domain; sequence FPECDHLKQIYDKCFTEFFQKFITPNYRHQYAVNPCERLHDVYKRCVEERLATQ. 2 short sequence motifs (cx9C motif) span residues 13–23 and 45–55; these read CDHLKQIYDKC and CERLHDVYKRC. Disulfide bonds link cysteine 13–cysteine 55 and cysteine 23–cysteine 45. Basic and acidic residues predominate over residues 80–90; the sequence is TDDDKLKDRQN. The disordered stretch occupies residues 80 to 103; it reads TDDDKLKDRQNNQKTNSENKCSSS. Residues 91–103 are compositionally biased toward polar residues; sequence NQKTNSENKCSSS.

This sequence belongs to the TRIAP1/MDM35 family.

This is an uncharacterized protein from Caenorhabditis elegans.